A 181-amino-acid chain; its full sequence is Adenine phosphoribosyltransferase (181 aa).

This sequence belongs to the purine/pyrimidine phosphoribosyltransferase family. As to quaternary structure, homodimer.

Its subcellular location is the cytoplasm. It carries out the reaction AMP + diphosphate = 5-phospho-alpha-D-ribose 1-diphosphate + adenine. The protein operates within purine metabolism; AMP biosynthesis via salvage pathway; AMP from adenine: step 1/1. Its function is as follows. Catalyzes a salvage reaction resulting in the formation of AMP, that is energically less costly than de novo synthesis. In Methylobacterium nodulans (strain LMG 21967 / CNCM I-2342 / ORS 2060), this protein is Adenine phosphoribosyltransferase.